Consider the following 77-residue polypeptide: U14-theraphotoxin-Cg1a 1 (77 aa).

Residues 1–21 (MKTSVLLVILGIAAITVQCTA) form the signal peptide. Positions 22–49 (SESVEQDSLRTFVDAVLGWNAEMASEAR) are excised as a propeptide. Intrachain disulfides connect cysteine 50–cysteine 64, cysteine 57–cysteine 69, and cysteine 63–cysteine 75. Lysine 77 is modified (lysine amide).

It belongs to the neurotoxin 10 (Hwtx-1) family. 65 (Jztx-21) subfamily. In terms of tissue distribution, expressed by the venom gland.

The protein localises to the secreted. Functionally, probable ion channel inhibitor. This Chilobrachys guangxiensis (Chinese earth tiger tarantula) protein is U14-theraphotoxin-Cg1a 1.